The following is a 215-amino-acid chain: Pyridoxine/pyridoxamine 5'-phosphate oxidase (215 aa).

Substrate contacts are provided by residues 9-12 and K69; that span reads RRDY. Residues 64-69, 79-80, K86, and Q108 each bind FMN; these read RVLLLK and FT. Positions 126, 130, and 134 each coordinate substrate. Residues 143-144 and W188 contribute to the FMN site; that span reads QS. Residue 194-196 coordinates substrate; that stretch reads RLH. R198 lines the FMN pocket.

Belongs to the pyridoxamine 5'-phosphate oxidase family. As to quaternary structure, homodimer. FMN serves as cofactor.

It catalyses the reaction pyridoxamine 5'-phosphate + O2 + H2O = pyridoxal 5'-phosphate + H2O2 + NH4(+). The enzyme catalyses pyridoxine 5'-phosphate + O2 = pyridoxal 5'-phosphate + H2O2. It functions in the pathway cofactor metabolism; pyridoxal 5'-phosphate salvage; pyridoxal 5'-phosphate from pyridoxamine 5'-phosphate: step 1/1. Its pathway is cofactor metabolism; pyridoxal 5'-phosphate salvage; pyridoxal 5'-phosphate from pyridoxine 5'-phosphate: step 1/1. Functionally, catalyzes the oxidation of either pyridoxine 5'-phosphate (PNP) or pyridoxamine 5'-phosphate (PMP) into pyridoxal 5'-phosphate (PLP). This Pseudomonas putida (strain W619) protein is Pyridoxine/pyridoxamine 5'-phosphate oxidase.